Here is a 182-residue protein sequence, read N- to C-terminus: UPF0398 protein lwe1908 (182 aa).

The protein belongs to the UPF0398 family.

In Listeria welshimeri serovar 6b (strain ATCC 35897 / DSM 20650 / CCUG 15529 / CIP 8149 / NCTC 11857 / SLCC 5334 / V8), this protein is UPF0398 protein lwe1908.